The sequence spans 214 residues: Pyrrolidone-carboxylate peptidase (214 aa).

Active-site residues include Glu-78, Cys-141, and His-165.

Belongs to the peptidase C15 family. In terms of assembly, homotetramer.

It localises to the cytoplasm. It catalyses the reaction Release of an N-terminal pyroglutamyl group from a polypeptide, the second amino acid generally not being Pro.. Functionally, removes 5-oxoproline from various penultimate amino acid residues except L-proline. The polypeptide is Pyrrolidone-carboxylate peptidase (Streptococcus pneumoniae serotype 2 (strain D39 / NCTC 7466)).